The primary structure comprises 438 residues: UDP-N-acetylmuramoylalanine--D-glutamate ligase (438 aa).

Residue 105 to 111 (GSNGKTT) coordinates ATP.

It belongs to the MurCDEF family.

The protein resides in the cytoplasm. It catalyses the reaction UDP-N-acetyl-alpha-D-muramoyl-L-alanine + D-glutamate + ATP = UDP-N-acetyl-alpha-D-muramoyl-L-alanyl-D-glutamate + ADP + phosphate + H(+). The protein operates within cell wall biogenesis; peptidoglycan biosynthesis. Its function is as follows. Cell wall formation. Catalyzes the addition of glutamate to the nucleotide precursor UDP-N-acetylmuramoyl-L-alanine (UMA). The polypeptide is UDP-N-acetylmuramoylalanine--D-glutamate ligase (Oenococcus oeni (strain ATCC BAA-331 / PSU-1)).